A 550-amino-acid polypeptide reads, in one-letter code: Hydroxylamine reductase (550 aa).

[2Fe-2S] cluster contacts are provided by Cys-3, Cys-6, Cys-18, and Cys-25. Positions 249, 273, 317, 405, 433, 458, 492, and 494 each coordinate hybrid [4Fe-2O-2S] cluster. Position 405 is a cysteine persulfide (Cys-405).

Belongs to the HCP family. Requires [2Fe-2S] cluster as cofactor. It depends on hybrid [4Fe-2O-2S] cluster as a cofactor.

It is found in the cytoplasm. The enzyme catalyses A + NH4(+) + H2O = hydroxylamine + AH2 + H(+). Catalyzes the reduction of hydroxylamine to form NH(3) and H(2)O. This is Hydroxylamine reductase from Escherichia coli (strain SMS-3-5 / SECEC).